The following is a 165-amino-acid chain: Crossover junction endodeoxyribonuclease RuvC (165 aa).

Active-site residues include aspartate 7, glutamate 67, and aspartate 140. Aspartate 7, glutamate 67, and aspartate 140 together coordinate Mg(2+).

The protein belongs to the RuvC family. Homodimer which binds Holliday junction (HJ) DNA. The HJ becomes 2-fold symmetrical on binding to RuvC with unstacked arms; it has a different conformation from HJ DNA in complex with RuvA. In the full resolvosome a probable DNA-RuvA(4)-RuvB(12)-RuvC(2) complex forms which resolves the HJ. Mg(2+) serves as cofactor.

The protein localises to the cytoplasm. The enzyme catalyses Endonucleolytic cleavage at a junction such as a reciprocal single-stranded crossover between two homologous DNA duplexes (Holliday junction).. In terms of biological role, the RuvA-RuvB-RuvC complex processes Holliday junction (HJ) DNA during genetic recombination and DNA repair. Endonuclease that resolves HJ intermediates. Cleaves cruciform DNA by making single-stranded nicks across the HJ at symmetrical positions within the homologous arms, yielding a 5'-phosphate and a 3'-hydroxyl group; requires a central core of homology in the junction. The consensus cleavage sequence is 5'-(A/T)TT(C/G)-3'. Cleavage occurs on the 3'-side of the TT dinucleotide at the point of strand exchange. HJ branch migration catalyzed by RuvA-RuvB allows RuvC to scan DNA until it finds its consensus sequence, where it cleaves and resolves the cruciform DNA. In Thermotoga petrophila (strain ATCC BAA-488 / DSM 13995 / JCM 10881 / RKU-1), this protein is Crossover junction endodeoxyribonuclease RuvC.